The following is a 737-amino-acid chain: Polyribonucleotide nucleotidyltransferase (737 aa).

Mg(2+) is bound by residues Asp514 and Asp520. Residues 580 to 639 (PRIITVKIPVDKIGEVIGPKGKMINQIQEDTGADITIEDDGTIYIGAQAGSQAEAARATI) enclose the KH domain. The S1 motif domain occupies 651-723 (GERYLGTVVK…SRGKLSLIPV (73 aa)).

Belongs to the polyribonucleotide nucleotidyltransferase family. The cofactor is Mg(2+).

It localises to the cytoplasm. The catalysed reaction is RNA(n+1) + phosphate = RNA(n) + a ribonucleoside 5'-diphosphate. Functionally, involved in mRNA degradation. Catalyzes the phosphorolysis of single-stranded polyribonucleotides processively in the 3'- to 5'-direction. This Streptomyces griseus subsp. griseus (strain JCM 4626 / CBS 651.72 / NBRC 13350 / KCC S-0626 / ISP 5235) protein is Polyribonucleotide nucleotidyltransferase.